Consider the following 195-residue polypeptide: MRTATVQRTTKETDIAITVNLDGTGDYSVSTGIGFLDHMVEQLSRHSLIDISMQVKGDLHIDQHHTVEDSALALGEAVAKALGDKRGIARYGEAHAPMDETLTRCVLDISGRPHCVYKSSFSQPRLGEMDTEMFPHWFHSFAQTAGITLHIETLYGENNHHIAESMYKALARALRQAVEIDPRKGDAIPSTKGVL.

This sequence belongs to the imidazoleglycerol-phosphate dehydratase family.

It is found in the cytoplasm. The enzyme catalyses D-erythro-1-(imidazol-4-yl)glycerol 3-phosphate = 3-(imidazol-4-yl)-2-oxopropyl phosphate + H2O. Its pathway is amino-acid biosynthesis; L-histidine biosynthesis; L-histidine from 5-phospho-alpha-D-ribose 1-diphosphate: step 6/9. This chain is Imidazoleglycerol-phosphate dehydratase, found in Sphingopyxis alaskensis (strain DSM 13593 / LMG 18877 / RB2256) (Sphingomonas alaskensis).